A 97-amino-acid chain; its full sequence is Early nodulin-75 (97 aa).

Positions 1–97 (RPHVHPPPEH…PEYQPPHEKP (97 aa)) are disordered. 2 stretches are compositionally biased toward pro residues: residues 9 to 22 (EHQP…PEYQ) and 31 to 43 (VHPP…PYQK). The segment covering 76 to 97 (PPHEKPPHEHPPPEYQPPHEKP) has biased composition (basic and acidic residues).

This sequence belongs to the nodulin 75 family.

Functionally, involved in early stages of root nodule development. The polypeptide is Early nodulin-75 (ENOD2) (Medicago sativa (Alfalfa)).